Consider the following 126-residue polypeptide: Large ribosomal subunit protein uL14m (126 aa).

The protein belongs to the universal ribosomal protein uL14 family. Component of the mitochondrial large ribosomal subunit (mt-LSU). Mature yeast 74S mitochondrial ribosomes consist of a small (37S) and a large (54S) subunit. The 37S small subunit contains a 15S ribosomal RNA (15S mt-rRNA) and at least 32 different proteins. The 54S large subunit contains a 21S rRNA (21S mt-rRNA) and at least 45 different proteins.

The protein localises to the mitochondrion. In terms of biological role, component of the mitochondrial ribosome (mitoribosome), a dedicated translation machinery responsible for the synthesis of mitochondrial genome-encoded proteins, including at least some of the essential transmembrane subunits of the mitochondrial respiratory chain. The mitoribosomes are attached to the mitochondrial inner membrane and translation products are cotranslationally integrated into the membrane. The polypeptide is Large ribosomal subunit protein uL14m (mrpl38) (Schizosaccharomyces pombe (strain 972 / ATCC 24843) (Fission yeast)).